We begin with the raw amino-acid sequence, 275 residues long: MLNLLVLALPLLVSLVHTAPAPGQALERAGIVGGKEAPGHKWPWQVSLRCLDQYWKHFCGGSLIHPQWVLTAAHCFGPEKADPLYIRVQLGEQHLYYQDRLLLVSRIIVHPNYYDEVNGADIALLELEDPVNLSSHVQPVTLPPASETFPKGTRCWVTGWGDVHSGWPLPPPYPLKQVRVPIVENSECDMQYHLGLSTGDNIPIVRDDMLCAGSEGHDSCQGDSGGPLVCRVNGTWLQAGVVSWGEGCALPNRPGIYTRVTHYLDWIHQCIPRES.

The first 20 residues, Met1 to Pro20, serve as a signal peptide directing secretion. The propeptide at Ala21 to Gly30 is activation peptide. A Peptidase S1 domain is found at Ile31–Pro272. Cys59 and Cys75 are oxidised to a cystine. Catalysis depends on charge relay system residues His74 and Asp121. Asn132 carries an N-linked (GlcNAc...) asparagine glycan. Disulfide bonds link Cys155–Cys230, Cys188–Cys211, and Cys220–Cys248. Ser224 serves as the catalytic Charge relay system. Asn233 is a glycosylation site (N-linked (GlcNAc...) asparagine).

Belongs to the peptidase S1 family. Tryptase subfamily. In terms of assembly, homotetramer.

It is found in the secreted. It carries out the reaction Preferential cleavage: Arg-|-Xaa, Lys-|-Xaa, but with more restricted specificity than trypsin.. In terms of biological role, tryptase is the major neutral protease present in mast cells and is secreted upon the coupled activation-degranulation response of this cell type. In Sus scrofa (Pig), this protein is Tryptase (MCT7).